A 255-amino-acid polypeptide reads, in one-letter code: Glucanase inhibitor protein 4 (255 aa).

Positions 1–21 are cleaved as a signal peptide; that stretch reads MKSITTASFALILFGVGAASA. The Peptidase S1 domain occupies 29-255; sequence VLGGGAVPSG…ESLGMDQLGH (227 aa). A disulfide bridge links Cys56 with Cys72. Asn90, Asn105, Asn110, and Asn160 each carry an N-linked (GlcNAc...) asparagine glycan. 2 disulfide bridges follow: Cys180/Cys192 and Cys202/Cys235.

The protein belongs to the peptidase S1 family. In terms of assembly, forms an apoplastic complex with host endoglucanases in tomato leaves during P.infestans infection.

It is found in the secreted. Functionally, secreted effector that suppresses host plant glucan elicitor-mediated defense responses. Targets host endoglucanases and inhibits the endoglucanase-mediated release of elicitor-active glucan oligosaccharides from P.infestans cell walls. The chain is Glucanase inhibitor protein 4 from Phytophthora infestans (Potato late blight agent).